The following is a 366-amino-acid chain: GDSL esterase/lipase LTL1 (366 aa).

The signal sequence occupies residues 1 to 27 (MNINCSPLGFLISLFFIVTFLAPQVKS). Ser36 (nucleophile) is an active-site residue. Asn117 carries N-linked (GlcNAc...) asparagine glycosylation. Active-site residues include Asp326 and His329. Asn354 is a glycosylation site (N-linked (GlcNAc...) asparagine).

The protein belongs to the 'GDSL' lipolytic enzyme family. Binds to VLG at the endomembrane system. As to expression, mostly expressed in flowers, reproductive stems and rosette leaves, and, to a lower extent, in roots.

It localises to the secreted. In terms of biological role, involved in the mechanisms of salt tolerance. Mediates resistance to LiCl and NaCl. This is GDSL esterase/lipase LTL1 from Arabidopsis thaliana (Mouse-ear cress).